The chain runs to 142 residues: Large ribosomal subunit protein uL22c (142 aa).

This sequence belongs to the universal ribosomal protein uL22 family. In terms of assembly, part of the 50S ribosomal subunit.

The protein localises to the plastid. Its subcellular location is the chloroplast. Its function is as follows. This protein binds specifically to 23S rRNA. Functionally, the globular domain of the protein is located near the polypeptide exit tunnel on the outside of the subunit, while an extended beta-hairpin is found that lines the wall of the exit tunnel in the center of the 70S ribosome. This chain is Large ribosomal subunit protein uL22c (rpl22), found in Carica papaya (Papaya).